Here is a 97-residue protein sequence, read N- to C-terminus: MKTLFVFAVGIMLSMRASAFTCPECRPELCGDPGYCEYGTTKDACDCCPVCFQGPGGYCGGPEDVFGICADGFACVPLVGERDSQDPEIVGTCVKIP.

The first 19 residues, 1–19 (MKTLFVFAVGIMLSMRASA), serve as a signal peptide directing secretion. The 77-residue stretch at 20–96 (FTCPECRPEL…PEIVGTCVKI (77 aa)) folds into the IGFBP N-terminal domain. T21 is a glycosylation site (O-linked (GalNAc...) threonine). Intrachain disulfides connect C22/C45, C25/C47, C30/C48, C36/C51, C59/C75, and C69/C93.

As to expression, expressed in hemocytes.

The protein localises to the secreted. Its function is as follows. Has a role in the innate immune system. This chain is Single insulin-like growth factor-binding domain protein-1, found in Cupiennius salei (American wandering spider).